A 299-amino-acid polypeptide reads, in one-letter code: Oxygen-dependent coproporphyrinogen-III oxidase (299 aa).

Substrate is bound at residue Ser92. 2 residues coordinate a divalent metal cation: His96 and His106. Catalysis depends on His106, which acts as the Proton donor. 108–110 provides a ligand contact to substrate; the sequence is NVR. A divalent metal cation is bound by residues His145 and His175. Residues 239-274 are important for dimerization; sequence YVEFNLVYDRGTLFGLQSGGRAESILMSLPPRVRWE. A substrate-binding site is contributed by 257-259; it reads GGR.

The protein belongs to the aerobic coproporphyrinogen-III oxidase family. In terms of assembly, homodimer. Requires a divalent metal cation as cofactor.

The protein localises to the cytoplasm. The catalysed reaction is coproporphyrinogen III + O2 + 2 H(+) = protoporphyrinogen IX + 2 CO2 + 2 H2O. It participates in porphyrin-containing compound metabolism; protoporphyrin-IX biosynthesis; protoporphyrinogen-IX from coproporphyrinogen-III (O2 route): step 1/1. Involved in the heme biosynthesis. Catalyzes the aerobic oxidative decarboxylation of propionate groups of rings A and B of coproporphyrinogen-III to yield the vinyl groups in protoporphyrinogen-IX. This chain is Oxygen-dependent coproporphyrinogen-III oxidase, found in Xanthomonas oryzae pv. oryzae (strain MAFF 311018).